Reading from the N-terminus, the 165-residue chain is Nascent polypeptide-associated complex subunit beta (165 aa).

2 disordered regions span residues 1–34 (MDQA…TSGA) and 133–165 (QNMQ…KSVD). Basic residues predominate over residues 20–30 (TPRRKVKKVHK). Residues 33-110 (GADDKKLQAT…GEEKELTELV (78 aa)) enclose the NAC-A/B domain. The segment covering 145–158 (DDDEDDIPDLVEGE) has biased composition (acidic residues).

Belongs to the NAC-beta family. Part of the nascent polypeptide-associated complex (NAC), consisting of egd2 and egd1. NAC associates with ribosomes via egd1.

The protein resides in the cytoplasm. It localises to the nucleus. Its function is as follows. Component of the nascent polypeptide-associated complex (NAC), a dynamic component of the ribosomal exit tunnel, protecting the emerging polypeptides from interaction with other cytoplasmic proteins to ensure appropriate nascent protein targeting. The NAC complex also promotes mitochondrial protein import by enhancing productive ribosome interactions with the outer mitochondrial membrane and blocks the inappropriate interaction of ribosomes translating non-secretory nascent polypeptides with translocation sites in the membrane of the endoplasmic reticulum. EGD1 may act as a transcription factor that exert a negative effect on the expression of several genes that are transcribed by RNA polymerase II. This chain is Nascent polypeptide-associated complex subunit beta (egd1), found in Emericella nidulans (strain FGSC A4 / ATCC 38163 / CBS 112.46 / NRRL 194 / M139) (Aspergillus nidulans).